Here is a 551-residue protein sequence, read N- to C-terminus: Chitinase (551 aa).

A signal peptide spans 1–17 (MLYKLLNVLWLVAVSNA). Residues 1 to 149 (MLYKLLNVLW…NKPGRREDKI (149 aa)) are chitin binding domain (CBD). In terms of domain architecture, GH18 spans 148-548 (KIVAAYFVEW…NAINAQFKPK (401 aa)). Residue N173 is glycosylated (N-linked (GlcNAc...) asparagine; by host). The active-site Proton donor is E305. A glycan (N-linked (GlcNAc...) asparagine; by host) is linked at N444. The Prevents secretion from ER motif lies at 548-551 (KDEL).

Belongs to the glycosyl hydrolase 18 family. Chitinase class II subfamily. In terms of assembly, interacts with host VCATH.

It is found in the host endoplasmic reticulum lumen. The catalysed reaction is Random endo-hydrolysis of N-acetyl-beta-D-glucosaminide (1-&gt;4)-beta-linkages in chitin and chitodextrins.. Its function is as follows. Plays a role in host liquefaction to facilitate horizontal transmission of the virus by hydrolyzing beta-chitin and by regulating the cysteine protease VCATH. Localized in the host reticulum endoplasmic via its KDEL motif, interacts with and thus prevents VCATH secretion before host cell lysis occurs. The chain is Chitinase (CHIA) from Lepidoptera (butterflies and moths).